A 153-amino-acid chain; its full sequence is MMASKRVAKELESLSKELPPYLRQLSSDDANVLVWHMLLLPDQLPYGLKAFQVRIDFPREYPFKPPTLRFTTKIYHPNVREDGLVCLPLISNENWKPYTKPYQVLEALNVLVSKPNLEEPVRLELADLLTQNPEMFRKKAEEFTLKFGVDRPS.

One can recognise a UBC core domain in the interval 2–149 (MASKRVAKEL…AEEFTLKFGV (148 aa)). The Glycyl thioester intermediate role is filled by Cys86.

This sequence belongs to the ubiquitin-conjugating enzyme family. In terms of assembly, interacts with RNF19A, RNF19B and RNF144B. Interacts with FLT3 (tyrosine phosphorylated). ISGylated.

The enzyme catalyses S-ubiquitinyl-[E1 ubiquitin-activating enzyme]-L-cysteine + [E2 ubiquitin-conjugating enzyme]-L-cysteine = [E1 ubiquitin-activating enzyme]-L-cysteine + S-ubiquitinyl-[E2 ubiquitin-conjugating enzyme]-L-cysteine.. The protein operates within protein modification; protein ubiquitination. Catalyzes the covalent attachment of ubiquitin or ISG15 to other proteins. Functions in the E6/E6-AP-induced ubiquitination of p53/TP53. Promotes ubiquitination and subsequent proteasomal degradation of FLT3. This is Ubiquitin/ISG15-conjugating enzyme E2 L6 (Ube2l6) from Mus musculus (Mouse).